The sequence spans 278 residues: Undecaprenyl-diphosphatase (278 aa).

Helical transmembrane passes span 2-22 (ALVE…TEWL), 44-64 (AFME…VVLL), 85-105 (IEMW…GLLW), 113-133 (FYNY…FIVI), 150-170 (ITYT…IFPG), 189-209 (TVAA…ASAL), 223-243 (LMIL…SIKF), and 253-273 (FKIF…YFSA).

This sequence belongs to the UppP family.

Its subcellular location is the cell membrane. It catalyses the reaction di-trans,octa-cis-undecaprenyl diphosphate + H2O = di-trans,octa-cis-undecaprenyl phosphate + phosphate + H(+). Its function is as follows. Catalyzes the dephosphorylation of undecaprenyl diphosphate (UPP). Confers resistance to bacitracin. This is Undecaprenyl-diphosphatase from Desulfitobacterium hafniense (strain DSM 10664 / DCB-2).